A 251-amino-acid polypeptide reads, in one-letter code: Ubiquinone/menaquinone biosynthesis C-methyltransferase UbiE (251 aa).

S-adenosyl-L-methionine is bound by residues Thr74, Asp95, 123–124, and Ser140; that span reads NA.

Belongs to the class I-like SAM-binding methyltransferase superfamily. MenG/UbiE family.

It carries out the reaction a 2-demethylmenaquinol + S-adenosyl-L-methionine = a menaquinol + S-adenosyl-L-homocysteine + H(+). The enzyme catalyses a 2-methoxy-6-(all-trans-polyprenyl)benzene-1,4-diol + S-adenosyl-L-methionine = a 5-methoxy-2-methyl-3-(all-trans-polyprenyl)benzene-1,4-diol + S-adenosyl-L-homocysteine + H(+). Its pathway is quinol/quinone metabolism; menaquinone biosynthesis; menaquinol from 1,4-dihydroxy-2-naphthoate: step 2/2. It functions in the pathway cofactor biosynthesis; ubiquinone biosynthesis. Functionally, methyltransferase required for the conversion of demethylmenaquinol (DMKH2) to menaquinol (MKH2) and the conversion of 2-polyprenyl-6-methoxy-1,4-benzoquinol (DDMQH2) to 2-polyprenyl-3-methyl-6-methoxy-1,4-benzoquinol (DMQH2). The chain is Ubiquinone/menaquinone biosynthesis C-methyltransferase UbiE from Pectobacterium atrosepticum (strain SCRI 1043 / ATCC BAA-672) (Erwinia carotovora subsp. atroseptica).